A 116-amino-acid polypeptide reads, in one-letter code: Large ribosomal subunit protein bL19 (116 aa).

Belongs to the bacterial ribosomal protein bL19 family.

Functionally, this protein is located at the 30S-50S ribosomal subunit interface and may play a role in the structure and function of the aminoacyl-tRNA binding site. This chain is Large ribosomal subunit protein bL19, found in Stutzerimonas stutzeri (strain A1501) (Pseudomonas stutzeri).